Reading from the N-terminus, the 378-residue chain is GDP-mannose 3,5-epimerase 1 (378 aa).

NAD(+) contacts are provided by residues 36–62 (GAGGFIGSHIARRLKSEGHYIIASDWK), Asp-60, and Asp-80. Substrate contacts are provided by residues Gly-105 and 145 to 147 (SAC). NAD(+) contacts are provided by Tyr-175 and Lys-179. The active-site Proton acceptor is Tyr-175. Substrate is bound by residues Asn-204, 217–219 (EKA), Lys-226, 242–244 (QTR), Arg-307, and Ser-357.

It belongs to the NAD(P)-dependent epimerase/dehydratase family. In terms of assembly, homodimer. NAD(+) is required as a cofactor.

The enzyme catalyses GDP-alpha-D-mannose = GDP-beta-L-gulose. It carries out the reaction GDP-beta-L-gulose = GDP-beta-L-galactose. The protein operates within cofactor biosynthesis; L-ascorbate biosynthesis via GDP-alpha-D-mannose pathway; L-ascorbate from GDP-alpha-D-mannose: step 1/5. Strongly activated by NAD. Activated by NADP. Slightly activated by NADH and NADPH. Inhibited by GDP. Functionally, catalyzes a reversible epimerization of GDP-D-mannose that precedes the committed step in the biosynthesis of vitamin C (L-ascorbate), resulting in the hydrolysis of the highly energetic glycosyl-pyrophosphoryl linkage. Able to catalyze 2 distinct epimerization reactions and can release both GDP-L-galactose and GDP-L-gulose from GDP-mannose. This Oryza sativa subsp. japonica (Rice) protein is GDP-mannose 3,5-epimerase 1 (GME-1).